A 452-amino-acid polypeptide reads, in one-letter code: Disintegrin and metalloproteinase domain-containing protein 11 (452 aa).

The region spanning 1–120 (RRHHSPLLVS…GGGSCLFNKP (120 aa)) is the Peptidase M12B domain. The Extracellular portion of the chain corresponds to 1–417 (RRHHSPLLVS…EKYKGPSGTN (417 aa)). 3 disulfides stabilise this stretch: Cys31–Cys115, Cys74–Cys99, and Cys76–Cys83. The region spanning 126 to 214 (PPSCGNGFIE…ACPANLHKQD (89 aa)) is the Disintegrin domain. Asn149 is a glycosylation site (N-linked (GlcNAc...) asparagine). A disulfide bond links Cys186 and Cys206. Asn288 and Asn356 each carry an N-linked (GlcNAc...) asparagine glycan. 3 disulfide bridges follow: Cys360/Cys375, Cys369/Cys381, and Cys383/Cys392. The region spanning 360-416 (CPGSWNGVICSDHGVCSNEGKCICHPEWTGKDCSVYDPLPVPKPTGVVEKYKGPSGT) is the EGF-like domain. Residues 418 to 438 (IIIGSIAGAVLIAAIVLGGTG) traverse the membrane as a helical segment. The Cytoplasmic portion of the chain corresponds to 439-452 (WGFKNIRRGRSGGG).

The precursor is cleaved by a furin endopeptidase. In terms of tissue distribution, detected in testis and barely expressed in heart and muscle. Not detectable in liver.

It is found in the presynaptic cell membrane. It localises to the perikaryon. Its subcellular location is the cell projection. The protein resides in the axon. Probable ligand for integrin in the brain. This is a non-catalytic metalloprotease-like protein. The chain is Disintegrin and metalloproteinase domain-containing protein 11 (adam11) from Xenopus laevis (African clawed frog).